Consider the following 669-residue polypeptide: Glycine--tRNA ligase beta subunit (669 aa).

The protein belongs to the class-II aminoacyl-tRNA synthetase family. In terms of assembly, tetramer of two alpha and two beta subunits.

It localises to the cytoplasm. It carries out the reaction tRNA(Gly) + glycine + ATP = glycyl-tRNA(Gly) + AMP + diphosphate. This chain is Glycine--tRNA ligase beta subunit, found in Phenylobacterium zucineum (strain HLK1).